Here is a 499-residue protein sequence, read N- to C-terminus: MEESPYLHSPYQVAIIATDLHHEDTIIQAAQSLDCLHKTINSIFERIDARLARNGSKVEDINNRVKRAQAKIDALVGSKRAIQIFAPARFPASDVLAPLPATFPQVAANPLMEQQVDQLPQGTYSSHSAADQKPDDADIFFHVRGDREQESPLVAERKITNRTAGLGILPAGGVRSVPSLMRFNTNEFAYGEDLNAWKRSLPPQNARRVASQSTQLTGEKQLAPAPHSLAHGTTKLATPAGDLRYNPAALAAPAIDVPLDLPDLPGIANDLQYEPVEEQTPIAPSQQFGDLPELPDLGLEEQDIIVQAIAAQTHIPGPVRRKSVGQCPSPVTAAPPPPPPPPPPPPPPPPAQTSAIPSPPPFPTKGAVKPLSPSLATPLNMPQPPPATEDPRSELMAAIRNAGGVHGGRLRSPAAAPLDVVDNSRSKAGGAVTGDLMADLHNKLMLRRKGISGSQNPVEATAGNPLMQQLSRVIPPPVQPRKGSKSSDEHSEDDEDGWN.

Disordered stretches follow at residues 317–433 and 448–499; these read GPVR…GAVT and RKGI…DGWN. The span at 333–363 shows a compositional bias: pro residues; sequence AAPPPPPPPPPPPPPPPPAQTSAIPSPPPFP. The region spanning 391–413 is the WH2 domain; it reads PRSELMAAIRNAGGVHGGRLRSP. A compositionally biased stretch (acidic residues) spans 490–499; it reads HSEDDEDGWN. At Ser491 the chain carries Phosphoserine.

Belongs to the WASH1 family. In terms of assembly, component of the WASH complex. Interacts with spir and capu. Interacts (via N-terminus) with Rho1 (via N-terminus).

Functionally, acts as a nucleation-promoting factor by activating the Arp2/3 complex to induce actin polymerization. Participates in both linear- and branched-actin networks. Functions in linear-filament (bundled F-actin) by acting downstream of Rho1 and regulating actin and microtubule organization during oogenesis. Nucleates actin in an Arp2/3-dependent manner and exhibits F-actin and microtubule bundling and cross-linking activity in the egg chamber. During embryogenesis, acts downstream of Rho1 to activate the Arp2/3 complex which is necessary for the developmental migration of tail hemocytes anteriorly along the ventral midline. Its function in hemocyte transmigration is independent of the WASH complex. May play a role in endosomal sorting; its assembly in the WASH complex may regulate its nucleation-promoting factor (NPF) activity. This chain is WASH complex subunit 1, found in Drosophila melanogaster (Fruit fly).